We begin with the raw amino-acid sequence, 218 residues long: Adenylate kinase (218 aa).

An ATP-binding site is contributed by 10–15 (GAGKGT). The tract at residues 30-59 (STGDMLRAAVKAGTPLGLEAKKVMDAGGLV) is NMP. AMP contacts are provided by residues threonine 31, arginine 36, 57–59 (GLV), 85–88 (GFPR), and glutamine 92. Residues 122–159 (ERRVHPASGRSYHVRFNPPKAEGVDDVTGEPLVQRDDD) form an LID region. ATP is bound by residues arginine 123 and 132-133 (SY). AMP-binding residues include arginine 156 and arginine 167. Glycine 203 lines the ATP pocket.

Belongs to the adenylate kinase family. In terms of assembly, monomer.

The protein resides in the cytoplasm. It carries out the reaction AMP + ATP = 2 ADP. It functions in the pathway purine metabolism; AMP biosynthesis via salvage pathway; AMP from ADP: step 1/1. Functionally, catalyzes the reversible transfer of the terminal phosphate group between ATP and AMP. Plays an important role in cellular energy homeostasis and in adenine nucleotide metabolism. This is Adenylate kinase from Bordetella pertussis (strain Tohama I / ATCC BAA-589 / NCTC 13251).